The primary structure comprises 276 residues: Large ribosomal subunit protein uL2 (276 aa).

2 disordered regions span residues 35 to 58 (RKLSKTGGRNSYGRMTSRHRGGGH) and 218 to 276 (RPIT…KNRK). A compositionally biased stretch (basic residues) spans 255–276 (RRPKKASNKMIVRRRPNGKNRK).

Belongs to the universal ribosomal protein uL2 family. Part of the 50S ribosomal subunit. Forms a bridge to the 30S subunit in the 70S ribosome.

Functionally, one of the primary rRNA binding proteins. Required for association of the 30S and 50S subunits to form the 70S ribosome, for tRNA binding and peptide bond formation. It has been suggested to have peptidyltransferase activity; this is somewhat controversial. Makes several contacts with the 16S rRNA in the 70S ribosome. This chain is Large ribosomal subunit protein uL2, found in Bifidobacterium adolescentis (strain ATCC 15703 / DSM 20083 / NCTC 11814 / E194a).